The sequence spans 161 residues: MKLSDIADNAGSRKKRMRVGRGIGSGKGKQSGRGGKGQTARSGVRIKGFEGGQMPMHRRLPKRGFNNIFRVEFAEINLDRLQEAVDAKKIDAGSVVNVEALVKGGVLRRAKGGLRLLGRGELKSKLNIEVHGATKTAIAAVEKAGGSVKILAPAKEEGEAA.

The interval 1–42 is disordered; the sequence is MKLSDIADNAGSRKKRMRVGRGIGSGKGKQSGRGGKGQTARS. The span at 21–37 shows a compositional bias: gly residues; the sequence is RGIGSGKGKQSGRGGKG.

Belongs to the universal ribosomal protein uL15 family. Part of the 50S ribosomal subunit.

Binds to the 23S rRNA. In Bradyrhizobium diazoefficiens (strain JCM 10833 / BCRC 13528 / IAM 13628 / NBRC 14792 / USDA 110), this protein is Large ribosomal subunit protein uL15.